A 151-amino-acid polypeptide reads, in one-letter code: Brain ribonuclease (151 aa).

The disordered stretch occupies residues 1–25 (KESAAAKFRRQHMDAGSSSSGNSNY). Positions 7 and 10 each coordinate substrate. His-12 serves as the catalytic Proton acceptor. 4 disulfide bridges follow: Cys-26–Cys-84, Cys-40–Cys-95, Cys-58–Cys-110, and Cys-65–Cys-72. Residue 41–45 (KPVNT) coordinates substrate. The N-linked (GlcNAc...) asparagine glycan is linked to Asn-62. Lys-66 and Arg-85 together coordinate substrate. Residue His-119 is the Proton donor of the active site. Thr-129 carries O-linked (GalNAc...) threonine glycosylation. O-linked (GalNAc...) serine glycosylation occurs at Ser-133.

The protein belongs to the pancreatic ribonuclease family.

It is found in the secreted. The chain is Brain ribonuclease (BRN) from Axis porcinus (Hog deer).